Here is a 446-residue protein sequence, read N- to C-terminus: Glutamyl-tRNA reductase (446 aa).

Residues 49-52 (TCNR), Ser-107, 112-114 (EPQ), and Gln-118 each bind substrate. Catalysis depends on Cys-50, which acts as the Nucleophile. 187-192 (GAGETI) contributes to the NADP(+) binding site. The tract at residues 417–446 (NANEDTRESVDKEQTGTTQGAARGDQRSTG) is disordered. The segment covering 420–430 (EDTRESVDKEQ) has biased composition (basic and acidic residues).

Belongs to the glutamyl-tRNA reductase family. Homodimer.

It carries out the reaction (S)-4-amino-5-oxopentanoate + tRNA(Glu) + NADP(+) = L-glutamyl-tRNA(Glu) + NADPH + H(+). The protein operates within porphyrin-containing compound metabolism; protoporphyrin-IX biosynthesis; 5-aminolevulinate from L-glutamyl-tRNA(Glu): step 1/2. Functionally, catalyzes the NADPH-dependent reduction of glutamyl-tRNA(Glu) to glutamate 1-semialdehyde (GSA). This is Glutamyl-tRNA reductase from Alkalilimnicola ehrlichii (strain ATCC BAA-1101 / DSM 17681 / MLHE-1).